The chain runs to 504 residues: 26S proteasome non-ATPase regulatory subunit 3 (504 aa).

Positions 254–433 constitute a PCI domain; the sequence is ARYMYYQGRI…RDGPRYMQSS (180 aa).

The protein belongs to the proteasome subunit S3 family. In terms of assembly, the 26S proteasome is composed of a core protease, known as the 20S proteasome, capped at one or both ends by the 19S regulatory complex (RC). The RC is composed of at least 18 different subunits in two subcomplexes, the base and the lid, which form the portions proximal and distal to the 20S proteolytic core, respectively.

In terms of biological role, acts as a regulatory subunit of the 26 proteasome which is involved in the ATP-dependent degradation of ubiquitinated proteins. In Caenorhabditis elegans, this protein is 26S proteasome non-ATPase regulatory subunit 3 (rpn-3).